A 202-amino-acid polypeptide reads, in one-letter code: Na(+)-translocating NADH-quinone reductase subunit E (202 aa).

A run of 6 helical transmembrane segments spans residues 11 to 31 (AVFVENMALAFFLGMCTFIAI), 35 to 55 (VETAIGLGIAVIVVQTITVPA), 81 to 101 (FLGLLSYIGVIAAIVQILEML), 114 to 134 (GVFLPLITVNCAIMAGSLFMV), 144 to 164 (TVYGVGSGFSWALAIAALAGI), and 180 to 200 (LGITFITIGLMSLGFMSFSGV).

It belongs to the NqrDE/RnfAE family. As to quaternary structure, composed of six subunits; NqrA, NqrB, NqrC, NqrD, NqrE and NqrF.

The protein resides in the cell inner membrane. The enzyme catalyses a ubiquinone + n Na(+)(in) + NADH + H(+) = a ubiquinol + n Na(+)(out) + NAD(+). Its function is as follows. NQR complex catalyzes the reduction of ubiquinone-1 to ubiquinol by two successive reactions, coupled with the transport of Na(+) ions from the cytoplasm to the periplasm. NqrA to NqrE are probably involved in the second step, the conversion of ubisemiquinone to ubiquinol. In Pseudomonas aeruginosa (strain LESB58), this protein is Na(+)-translocating NADH-quinone reductase subunit E.